The sequence spans 436 residues: Nucleolar protein 4-like (436 aa).

The tract at residues 1 to 184 is disordered; that stretch reads MSDSTWMSAD…KMNDSEGMDP (184 aa). Positions 41-61 are enriched in low complexity; the sequence is SESGSGNGSSTLNPSTSSSTQ. Residue Ser130 is modified to Phosphoserine. The segment covering 160–169 has biased composition (acidic residues); sequence ADDDDDDHDD. Over residues 170–184 the composition is skewed to basic and acidic residues; sequence HEDNDKMNDSEGMDP. Ser295 carries the post-translational modification Phosphoserine. Residues 351 to 366 are compositionally biased toward polar residues; the sequence is QPPASLQTGNHSNGPT. Residues 351–400 form a disordered region; it reads QPPASLQTGNHSNGPTDLSMKGGASTTSTTPTPTPSSTSTSRPVPTAQLS. Positions 375–396 are enriched in low complexity; it reads STTSTTPTPTPSSTSTSRPVPT.

This chain is Nucleolar protein 4-like (NOL4L), found in Pongo abelii (Sumatran orangutan).